Consider the following 141-residue polypeptide: Putative lipoprotein Tanf_09445 (141 aa).

The N-terminal stretch at 1 to 20 is a signal peptide; it reads MKQKIILWIGALLLLTAGTG. C21 carries the N-palmitoyl cysteine lipid modification. C21 carries the S-diacylglycerol cysteine lipid modification.

The protein resides in the cell membrane. The sequence is that of Putative lipoprotein Tanf_09445 from Tannerella forsythia (strain ATCC 43037 / JCM 10827 / CCUG 21028 A / KCTC 5666 / FDC 338) (Bacteroides forsythus).